Here is a 217-residue protein sequence, read N- to C-terminus: Protein OPI10 homolog (217 aa).

The protein belongs to the OPI10 family.

The sequence is that of Protein OPI10 homolog from Dictyostelium discoideum (Social amoeba).